The chain runs to 330 residues: MTLLPDPQHPLEEAEAEAAFAAILDGAVADEAIARFLVGLSDRGENASEIAGAARAMRARMIPIKAPANAIDVCGTGGDGHHTLNVSTAVSLVVAACGVPVAKHGNRAASSKAGAADTLEALGLNLDRAAETAEETLADLGICFLFAARHHPSMGRIMPIRKALGRRTIFNLMGPLANPANVRRQLVGIARPAYVPIYAEAILRLGTDHSFVISGDEGLDELSLAGGNELAEVRDGEISMRRVTPADAGLPESAVTAIRGGDAAHNARALRALLEGEHGPYRNAVLFNAAAALIIAGEAQDWHEGVEEAAEAIDKGLANALLNCWIAALE.

5-phospho-alpha-D-ribose 1-diphosphate contacts are provided by residues G75, 78-79 (GD), T83, 85-88 (NVST), 103-111 (KHGNRAASS), and A115. G75 is an anthranilate binding site. A Mg(2+)-binding site is contributed by S87. N106 serves as a coordination point for anthranilate. R161 provides a ligand contact to anthranilate. Residues D220 and E221 each coordinate Mg(2+).

It belongs to the anthranilate phosphoribosyltransferase family. As to quaternary structure, homodimer. It depends on Mg(2+) as a cofactor.

It catalyses the reaction N-(5-phospho-beta-D-ribosyl)anthranilate + diphosphate = 5-phospho-alpha-D-ribose 1-diphosphate + anthranilate. The protein operates within amino-acid biosynthesis; L-tryptophan biosynthesis; L-tryptophan from chorismate: step 2/5. Functionally, catalyzes the transfer of the phosphoribosyl group of 5-phosphorylribose-1-pyrophosphate (PRPP) to anthranilate to yield N-(5'-phosphoribosyl)-anthranilate (PRA). The chain is Anthranilate phosphoribosyltransferase from Novosphingobium aromaticivorans (strain ATCC 700278 / DSM 12444 / CCUG 56034 / CIP 105152 / NBRC 16084 / F199).